A 345-amino-acid chain; its full sequence is Ribonucleoside-diphosphate reductase subunit beta (345 aa).

Residues Asp88, Glu118, and His121 each coordinate Fe cation. The active site involves Tyr125. Positions 185, 219, and 222 each coordinate Fe cation.

It belongs to the ribonucleoside diphosphate reductase small chain family. As to quaternary structure, tetramer of two alpha and two beta subunits. It depends on Fe cation as a cofactor.

It catalyses the reaction a 2'-deoxyribonucleoside 5'-diphosphate + [thioredoxin]-disulfide + H2O = a ribonucleoside 5'-diphosphate + [thioredoxin]-dithiol. Functionally, provides the precursors necessary for DNA synthesis. Catalyzes the biosynthesis of deoxyribonucleotides from the corresponding ribonucleotides. In Halalkalibacterium halodurans (strain ATCC BAA-125 / DSM 18197 / FERM 7344 / JCM 9153 / C-125) (Bacillus halodurans), this protein is Ribonucleoside-diphosphate reductase subunit beta (nrdB).